We begin with the raw amino-acid sequence, 120 residues long: NAD(P)H-quinone oxidoreductase subunit 3, chloroplastic (120 aa).

The next 3 helical transmembrane spans lie at 7–27 (YDTF…AFSI), 64–84 (MFAL…PWAM), and 88–108 (ILGL…IVGL).

The protein belongs to the complex I subunit 3 family. In terms of assembly, NDH is composed of at least 16 different subunits, 5 of which are encoded in the nucleus.

Its subcellular location is the plastid. The protein resides in the chloroplast thylakoid membrane. It carries out the reaction a plastoquinone + NADH + (n+1) H(+)(in) = a plastoquinol + NAD(+) + n H(+)(out). The catalysed reaction is a plastoquinone + NADPH + (n+1) H(+)(in) = a plastoquinol + NADP(+) + n H(+)(out). NDH shuttles electrons from NAD(P)H:plastoquinone, via FMN and iron-sulfur (Fe-S) centers, to quinones in the photosynthetic chain and possibly in a chloroplast respiratory chain. The immediate electron acceptor for the enzyme in this species is believed to be plastoquinone. Couples the redox reaction to proton translocation, and thus conserves the redox energy in a proton gradient. The polypeptide is NAD(P)H-quinone oxidoreductase subunit 3, chloroplastic (Cryptomeria japonica (Japanese cedar)).